The following is a 408-amino-acid chain: Peptidase T (408 aa).

Residue His-78 participates in Zn(2+) binding. Asp-80 is a catalytic residue. A Zn(2+)-binding site is contributed by Asp-141. Residue Glu-175 is the Proton acceptor of the active site. Zn(2+) is bound by residues Glu-176, Asp-198, and His-380.

Belongs to the peptidase M20B family. Zn(2+) serves as cofactor.

The protein localises to the cytoplasm. The enzyme catalyses Release of the N-terminal residue from a tripeptide.. Functionally, cleaves the N-terminal amino acid of tripeptides. This chain is Peptidase T, found in Clostridium acetobutylicum (strain ATCC 824 / DSM 792 / JCM 1419 / IAM 19013 / LMG 5710 / NBRC 13948 / NRRL B-527 / VKM B-1787 / 2291 / W).